A 244-amino-acid chain; its full sequence is 5-oxoprolinase subunit A (244 aa).

Belongs to the LamB/PxpA family. In terms of assembly, forms a complex composed of PxpA, PxpB and PxpC.

It carries out the reaction 5-oxo-L-proline + ATP + 2 H2O = L-glutamate + ADP + phosphate + H(+). Its function is as follows. Catalyzes the cleavage of 5-oxoproline to form L-glutamate coupled to the hydrolysis of ATP to ADP and inorganic phosphate. The chain is 5-oxoprolinase subunit A from Salmonella choleraesuis (strain SC-B67).